We begin with the raw amino-acid sequence, 193 residues long: NADH-quinone oxidoreductase subunit B (193 aa).

4 residues coordinate [4Fe-4S] cluster: cysteine 72, cysteine 73, cysteine 137, and cysteine 167.

The protein belongs to the complex I 20 kDa subunit family. NDH-1 is composed of 14 different subunits. Subunits NuoB, C, D, E, F, and G constitute the peripheral sector of the complex. Requires [4Fe-4S] cluster as cofactor.

It is found in the cell inner membrane. It catalyses the reaction a quinone + NADH + 5 H(+)(in) = a quinol + NAD(+) + 4 H(+)(out). Its function is as follows. NDH-1 shuttles electrons from NADH, via FMN and iron-sulfur (Fe-S) centers, to quinones in the respiratory chain. The immediate electron acceptor for the enzyme in this species is believed to be ubiquinone. Couples the redox reaction to proton translocation (for every two electrons transferred, four hydrogen ions are translocated across the cytoplasmic membrane), and thus conserves the redox energy in a proton gradient. The chain is NADH-quinone oxidoreductase subunit B from Bartonella henselae (strain ATCC 49882 / DSM 28221 / CCUG 30454 / Houston 1) (Rochalimaea henselae).